The primary structure comprises 350 residues: Putative [LysW]-lysine/[LysW]-ornithine hydrolase (350 aa).

His72 contacts Zn(2+). Residue Asp74 is part of the active site. Asp96 provides a ligand contact to Zn(2+). The active-site Proton acceptor is Glu128. Zn(2+) is bound by residues Glu129, Glu152, and His321.

The protein belongs to the peptidase M20A family. LysK subfamily. Requires Zn(2+) as cofactor. Co(2+) is required as a cofactor.

It is found in the cytoplasm. It catalyses the reaction [amino-group carrier protein]-C-terminal-gamma-(L-lysyl)-L-glutamate + H2O = [amino-group carrier protein]-C-terminal-L-glutamate + L-lysine. It carries out the reaction [amino-group carrier protein]-C-terminal-gamma-(L-ornithyl)-L-glutamate + H2O = [amino-group carrier protein]-C-terminal-L-glutamate + L-ornithine. It functions in the pathway amino-acid biosynthesis; L-lysine biosynthesis via AAA pathway; L-lysine from L-alpha-aminoadipate (Thermus route): step 5/5. It participates in amino-acid biosynthesis; L-arginine biosynthesis. Its function is as follows. Catalyzes the release of L-lysine from [LysW]-gamma-L-lysine and the release of L-ornithine from [LysW]-L-ornithine. In Aeropyrum pernix (strain ATCC 700893 / DSM 11879 / JCM 9820 / NBRC 100138 / K1), this protein is Putative [LysW]-lysine/[LysW]-ornithine hydrolase.